The chain runs to 423 residues: Putative competence-damage inducible protein (423 aa).

This sequence belongs to the CinA family.

In Streptococcus pyogenes serotype M1, this protein is Putative competence-damage inducible protein.